The primary structure comprises 324 residues: Olfactory receptor 2T2 (324 aa).

The Extracellular segment spans residues 1–26 (MGMEGLLQNSTNFVLTGLITHPAFPG). The N-linked (GlcNAc...) asparagine glycan is linked to Asn9. A helical membrane pass occupies residues 27 to 50 (LLFAIVFSIFVVAITANLVMILLI). The Cytoplasmic segment spans residues 51–58 (HMDSRLHT). The helical transmembrane segment at 59–80 (PMYFLLSQLSIMDTIYICITVP) threads the bilayer. The Extracellular portion of the chain corresponds to 81 to 101 (KMLQDLLSKDKTISFLGCAVQ). A disulfide bridge links Cys98 with Cys190. The helical transmembrane segment at 102-121 (IFLYLTLIGGEFFLLGLMAY) threads the bilayer. At 122–140 (DRYVAVCNPLRYPLLMNRR) the chain is on the cytoplasmic side. Residues 141–159 (VCLFMVVGSWVGGSLDGFM) form a helical membrane-spanning segment. At 160 to 196 (LTPVTMSFPFCRSREINHFFCEIPAVLKLSCTDTSLY) the chain is on the extracellular side. Residues 197 to 220 (ETLMYACCVLMLLIPLSVISVSYT) form a helical membrane-spanning segment. Topologically, residues 221-237 (HILLTVHRMNSAEGRRK) are cytoplasmic. A helical transmembrane segment spans residues 238–260 (AFATCSSHIMVVSVFYGAAFYTN). Over 261–273 (VLPHSYHTPEKDK) the chain is Extracellular. The chain crosses the membrane as a helical span at residues 274 to 293 (VVSAFYTILTPMLNPLIYSL). Topologically, residues 294–324 (RNKDVAAALRKVLGRCGSSQSIRVATVIRKG) are cytoplasmic.

This sequence belongs to the G-protein coupled receptor 1 family.

The protein localises to the cell membrane. Its function is as follows. Odorant receptor. This is Olfactory receptor 2T2 (OR2T2) from Homo sapiens (Human).